Here is a 222-residue protein sequence, read N- to C-terminus: Triosephosphate isomerase (222 aa).

9–11 (NYK) provides a ligand contact to substrate. The Electrophile role is filled by H93. The active-site Proton acceptor is E141. Substrate-binding positions include I146, G181, and 202-203 (AS).

It belongs to the triosephosphate isomerase family. Homotetramer; dimer of dimers.

It localises to the cytoplasm. It carries out the reaction D-glyceraldehyde 3-phosphate = dihydroxyacetone phosphate. The protein operates within carbohydrate biosynthesis; gluconeogenesis. It participates in carbohydrate degradation; glycolysis; D-glyceraldehyde 3-phosphate from glycerone phosphate: step 1/1. Involved in the gluconeogenesis. Catalyzes stereospecifically the conversion of dihydroxyacetone phosphate (DHAP) to D-glyceraldehyde-3-phosphate (G3P). The protein is Triosephosphate isomerase of Methanosarcina mazei (strain ATCC BAA-159 / DSM 3647 / Goe1 / Go1 / JCM 11833 / OCM 88) (Methanosarcina frisia).